Here is a 216-residue protein sequence, read N- to C-terminus: Adenylate kinase (216 aa).

10 to 15 (GAGKGT) contributes to the ATP binding site. Positions 30 to 59 (STGDMFRAAMKAETEMGLQAKSFIDKGALV) are NMP. AMP-binding positions include Thr31, Arg36, 57–59 (ALV), 85–88 (GFPR), and Gln92. Positions 126–163 (GRRICKECGATYHLEFNPPAKADVCDKCGGELYQRSDD) are LID. Arg127 provides a ligand contact to ATP. Residues Cys130 and Cys133 each contribute to the Zn(2+) site. 136–137 (TY) is a binding site for ATP. Residues Cys150 and Cys153 each coordinate Zn(2+). The AMP site is built by Arg160 and Arg171. Residue Gln199 coordinates ATP.

Belongs to the adenylate kinase family. As to quaternary structure, monomer.

The protein resides in the cytoplasm. The catalysed reaction is AMP + ATP = 2 ADP. It functions in the pathway purine metabolism; AMP biosynthesis via salvage pathway; AMP from ADP: step 1/1. In terms of biological role, catalyzes the reversible transfer of the terminal phosphate group between ATP and AMP. Plays an important role in cellular energy homeostasis and in adenine nucleotide metabolism. The polypeptide is Adenylate kinase (Bacillus cereus (strain B4264)).